A 628-amino-acid polypeptide reads, in one-letter code: E3 SUMO-protein ligase PIAS3 (628 aa).

An interaction with CCAR2 region spans residues 1-200 (MAELGELKHM…QLRFCLCETS (200 aa)). The SAP domain occupies 11–45 (VMSFRVSELQVLLGFAGRNKSGRKHELLAKALHLL). Residues 19-23 (LQVLL) carry the LXXLL motif motif. Glycyl lysine isopeptide (Lys-Gly) (interchain with G-Cter in SUMO2) cross-links involve residues K46 and K56. Residues 72 to 95 (PSDLSLLSLPPGTSPVGSPSPLAS) form a disordered region. In terms of domain architecture, PINIT spans 115–280 (MHPPLPQPVH…SLSVYLVRQL (166 aa)). Residues K230 and K307 each participate in a glycyl lysine isopeptide (Lys-Gly) (interchain with G-Cter in SUMO2) cross-link. An SP-RING-type zinc finger spans residues 312–393 (PDSEVATTSL…FMEILNSCSD (82 aa)). The Zn(2+) site is built by C343, H345, C366, and C369. Residues 450-460 (LTIESSSDEED) are SUMO1-binding. Glycyl lysine isopeptide (Lys-Gly) (interchain with G-Cter in SUMO2) cross-links involve residues K466 and K482. The tract at residues 573–618 (LAPTLGSSHRSATPAPAPGRVSSIVAPGSSLREGHGGPLPSGPSLT) is disordered.

Belongs to the PIAS family. In terms of assembly, binds SUMO1 and UBE2I. Interacts with AR, BCL11A, GFI1, HMGA2, IRF1, MITF, NCOA2, as well as with STAT3, after treatment with IL6, CNTF or OSM and with STAT5, after PRL stimulation. Interacts with PLAG1. Interacts with ZFHX3. Interacts with MTA1. Interacts with CCAR2 (via N-terminus). Interacts with TRIM8. Interacts with PRDM1. Post-translationally, sumoylated. In terms of tissue distribution, widely expressed, with highest levels in lung, kidney and spleen.

It is found in the cytoplasm. It localises to the nucleus. Its subcellular location is the nucleus speckle. The protein operates within protein modification; protein sumoylation. Functions as an E3-type small ubiquitin-like modifier (SUMO) ligase, stabilizing the interaction between UBE2I and the substrate, and as a SUMO-tethering factor. Plays a crucial role as a transcriptional coregulation in various cellular pathways, including the STAT pathway and the steroid hormone signaling pathway. The effects of this transcriptional coregulation, transactivation or silencing, may vary depending upon the biological context. Enhances the sumoylation of MTA1 and may participate in its paralog-selective sumoylation. Sumoylates CCAR2 which promotes its interaction with SIRT1. Diminishes the sumoylation of ZFHX3 by preventing the colocalization of ZFHX3 with SUMO1 in the nucleus. In Rattus norvegicus (Rat), this protein is E3 SUMO-protein ligase PIAS3 (Pias3).